Consider the following 159-residue polypeptide: Ribosomal RNA large subunit methyltransferase H (159 aa).

Residues leucine 76, glycine 107, and 126–131 (LSSLTL) each bind S-adenosyl-L-methionine.

This sequence belongs to the RNA methyltransferase RlmH family. As to quaternary structure, homodimer.

It localises to the cytoplasm. It carries out the reaction pseudouridine(1915) in 23S rRNA + S-adenosyl-L-methionine = N(3)-methylpseudouridine(1915) in 23S rRNA + S-adenosyl-L-homocysteine + H(+). Specifically methylates the pseudouridine at position 1915 (m3Psi1915) in 23S rRNA. The protein is Ribosomal RNA large subunit methyltransferase H of Cupriavidus necator (strain ATCC 17699 / DSM 428 / KCTC 22496 / NCIMB 10442 / H16 / Stanier 337) (Ralstonia eutropha).